Consider the following 319-residue polypeptide: MKVNISIFGFGTVGRALAEIIAEKSRIFGVELNVISITDRSGTIWGDFDLLEAKEVKESTGKLSNIGDYEVYNFSPQELVEEVKPNILVDVSSWDEAHEMYKVALGEGISVVTSNKPPIANYYDELMNLAKENNAGIFFESTVMAGTPIIGVLRENLLGENIKRIDAVVNASTTFILTKMSEGKTLDDAIEEAKSLGILEEDPSKDIDGIDAYYKAKILHWVSYGEPPEEEERLGIREVRDARNVRLVAQVSKGKISVKPRKLSSDNPLLVEGVQNAAVIRTNNLGEVILKGPGGGGRVTASGVFTDIIKATLKFPNLR.

NADPH-binding residues include F10, T12, V13, R40, K57, S92, S93, S114, and K116. V13 contacts NAD(+). Residues V13 and R40 each contribute to the NADP(+) site. S92 serves as a coordination point for NAD(+). An NADP(+)-binding site is contributed by S92. NADP(+) contacts are provided by S114 and K116. Residues E140, V143, A145, and T147 each coordinate Na(+). Residues G197 and E200 each coordinate NADP(+). Residues E200 and D211 each contribute to the L-homoserine site. The Proton donor role is filled by K215. G296 lines the NADPH pocket. Residue G296 participates in NAD(+) binding. G296 provides a ligand contact to NADP(+).

It belongs to the homoserine dehydrogenase family. In terms of assembly, homodimer. A metal cation serves as cofactor.

The enzyme catalyses L-homoserine + NAD(+) = L-aspartate 4-semialdehyde + NADH + H(+). The protein operates within amino-acid biosynthesis; L-methionine biosynthesis via de novo pathway; L-homoserine from L-aspartate: step 3/3. It functions in the pathway amino-acid biosynthesis; L-threonine biosynthesis; L-threonine from L-aspartate: step 3/5. In terms of biological role, catalyzes the conversion of L-aspartate-beta-semialdehyde (L-Asa) to L-homoserine (L-Hse), the third step in the biosynthesis of threonine and methionine from aspartate. Utilizes NADH but not NADPH as coenzyme. This is Homoserine dehydrogenase from Pyrococcus horikoshii (strain ATCC 700860 / DSM 12428 / JCM 9974 / NBRC 100139 / OT-3).